The chain runs to 424 residues: Caspase-2 (424 aa).

Positions 1–140 (MLGACGMQRY…IVEHSLDSGD (140 aa)) are excised as a propeptide. One can recognise a CARD domain in the interval 7 to 96 (MQRYHQEALK…QHLAEMILKT (90 aa)). Catalysis depends on residues histidine 248 and cysteine 291. A compositionally biased stretch (basic and acidic residues) spans 296 to 310 (TDRGVDQRDGKERSD). The interval 296-325 (TDRGVDQRDGKERSDSPGCEESDANKEENL) is disordered.

This sequence belongs to the peptidase C14A family. Heterotetramer that consists of two anti-parallel arranged heterodimers, each one formed by a p18 subunit and a p12 subunit.

The catalysed reaction is Strict requirement for an Asp residue at P1, with 316-Asp being essential for proteolytic activity and has a preferred cleavage sequence of Val-Asp-Val-Ala-Asp-|-.. In terms of biological role, involved in the activation cascade of caspases responsible for apoptosis execution. Might function by either activating some proteins required for cell death or inactivating proteins necessary for cell survival. The sequence is that of Caspase-2 (CASP2) from Gallus gallus (Chicken).